Reading from the N-terminus, the 95-residue chain is Aspartyl/glutamyl-tRNA(Asn/Gln) amidotransferase subunit C (95 aa).

Belongs to the GatC family. In terms of assembly, heterotrimer of A, B and C subunits.

It catalyses the reaction L-glutamyl-tRNA(Gln) + L-glutamine + ATP + H2O = L-glutaminyl-tRNA(Gln) + L-glutamate + ADP + phosphate + H(+). The catalysed reaction is L-aspartyl-tRNA(Asn) + L-glutamine + ATP + H2O = L-asparaginyl-tRNA(Asn) + L-glutamate + ADP + phosphate + 2 H(+). Allows the formation of correctly charged Asn-tRNA(Asn) or Gln-tRNA(Gln) through the transamidation of misacylated Asp-tRNA(Asn) or Glu-tRNA(Gln) in organisms which lack either or both of asparaginyl-tRNA or glutaminyl-tRNA synthetases. The reaction takes place in the presence of glutamine and ATP through an activated phospho-Asp-tRNA(Asn) or phospho-Glu-tRNA(Gln). The polypeptide is Aspartyl/glutamyl-tRNA(Asn/Gln) amidotransferase subunit C (Rhizobium etli (strain CIAT 652)).